Consider the following 551-residue polypeptide: Glucose-6-phosphate isomerase (551 aa).

Glu-349 functions as the Proton donor in the catalytic mechanism. Residues His-378 and Lys-480 contribute to the active site.

It belongs to the GPI family.

It is found in the cytoplasm. The enzyme catalyses alpha-D-glucose 6-phosphate = beta-D-fructose 6-phosphate. The protein operates within carbohydrate biosynthesis; gluconeogenesis. It participates in carbohydrate degradation; glycolysis; D-glyceraldehyde 3-phosphate and glycerone phosphate from D-glucose: step 2/4. Its function is as follows. Catalyzes the reversible isomerization of glucose-6-phosphate to fructose-6-phosphate. This is Glucose-6-phosphate isomerase from Prochlorococcus marinus (strain MIT 9313).